Consider the following 295-residue polypeptide: Protoheme IX farnesyltransferase (295 aa).

A run of 9 helical transmembrane segments spans residues 24 to 44, 45 to 65, 94 to 114, 117 to 137, 144 to 164, 171 to 191, 216 to 236, 240 to 260, and 272 to 292; these read IMYLVVFTAVAGMVTAPGSMH, PFLALISLICVALGSGSAGAI, SALEFGITLGILSVFIMAIAV, ISAALLAVSILFYVFIYTIWL, NIVIGGAAGAFPPMIGWAAVT, SFILFLVIFMWTPPHFWALSL, KYILIYSVLLVLTSLLPALFL, LLYLSMATFEGCVFIWYAVSV, and MFSYSISYLFSLFASIIFCSI.

This sequence belongs to the UbiA prenyltransferase family. Protoheme IX farnesyltransferase subfamily.

It localises to the cell membrane. The enzyme catalyses heme b + (2E,6E)-farnesyl diphosphate + H2O = Fe(II)-heme o + diphosphate. Its pathway is porphyrin-containing compound metabolism; heme O biosynthesis; heme O from protoheme: step 1/1. In terms of biological role, converts heme B (protoheme IX) to heme O by substitution of the vinyl group on carbon 2 of heme B porphyrin ring with a hydroxyethyl farnesyl side group. The chain is Protoheme IX farnesyltransferase from Wolbachia pipientis wMel.